Here is a 436-residue protein sequence, read N- to C-terminus: Testican-3 (436 aa).

The N-terminal stretch at 1–22 (MLKVSAVLCVCAAAWCSQSLAA) is a signal peptide. Intrachain disulfides connect C90/C101, C95/C111, C139/C169, C142/C162, C151/C183, C317/C341, C352/C359, and C361/C380. A Kazal-like domain is found at 133 to 185 (GPILSTCKQCPVVYPSPVCGSDGHTYSFQCKLEYQACVLGKQISVKCEGHCPC). Residues 314 to 380 (DPPCQTELSN…GSRINGVADC (67 aa)) form the Thyroglobulin type-1 domain. Residues S387 and S392 are each glycosylated (O-linked (Xyl...) (glycosaminoglycan) serine). The tract at residues 393–436 (GDFHEWTDDEDDEDDIMNDEDEIEDDDEDEGDDDDGGDDHDGYI) is disordered. Residues 399–430 (TDDEDDEDDIMNDEDEIEDDDEDEGDDDDGGD) are compositionally biased toward acidic residues.

Contains chondroitin sulfate and heparan sulfate O-linked oligosaccharides. Expressed in brain.

The protein localises to the secreted. Its subcellular location is the extracellular space. The protein resides in the extracellular matrix. Functionally, may participate in diverse steps of neurogenesis. Inhibits the processing of pro-matrix metalloproteinase 2 (MMP-2) by MT1-MMP and MT3-MMP. May interfere with tumor invasion. This chain is Testican-3 (SPOCK3), found in Pongo abelii (Sumatran orangutan).